A 248-amino-acid polypeptide reads, in one-letter code: Polyhedrin (248 aa).

An N-terminal signal peptide occupies residues Met1 to Tyr27. N-linked (GlcNAc...) asparagine; by host glycans are attached at residues Asn28, Asn77, Asn86, and Asn237.

It is found in the host cytoplasm. Functionally, major component of the virus occlusion bodies, which are large proteinaceous structures (polyhedra), that protect the virus from the outside environment for extended periods until they are ingested by insect larvae. This chain is Polyhedrin, found in Bombyx mori cytoplasmic polyhedrosis virus (BmCPV).